The primary structure comprises 259 residues: Ribosome maturation factor RimP (259 aa).

The disordered stretch occupies residues 198–259; that stretch reads SLGLAPEPPP…RGEIDTSEGD (62 aa). Over residues 243–253 the composition is skewed to basic and acidic residues; the sequence is LAADKARRGEI.

This sequence belongs to the RimP family.

The protein resides in the cytoplasm. Required for maturation of 30S ribosomal subunits. The polypeptide is Ribosome maturation factor RimP (Rhodopseudomonas palustris (strain TIE-1)).